Consider the following 43-residue polypeptide: MLGIDARLFLVVAPILAAVSWAAFNIGRAAVGQLQLLIKRSRA.

The helical transmembrane segment at 8–26 threads the bilayer; that stretch reads LFLVVAPILAAVSWAAFNI.

It belongs to the PsbY family. In terms of assembly, PSII is composed of 1 copy each of membrane proteins PsbA, PsbB, PsbC, PsbD, PsbE, PsbF, PsbH, PsbI, PsbJ, PsbK, PsbL, PsbM, PsbT, PsbX, PsbY, PsbZ, Psb30/Ycf12, peripheral proteins PsbO, CyanoQ (PsbQ), PsbU, PsbV and a large number of cofactors. It forms dimeric complexes.

The protein localises to the cellular thylakoid membrane. Its function is as follows. Loosely associated component of the core of photosystem II (PSII), it is not always seen in crystals. PSII is a light-driven water plastoquinone oxidoreductase, using light energy to abstract electrons from H(2)O, generating a proton gradient subsequently used for ATP formation. In Parasynechococcus marenigrum (strain WH8102), this protein is Photosystem II reaction center protein Y.